Reading from the N-terminus, the 179-residue chain is CASP-like protein 5A2 (179 aa).

Topologically, residues 1–54 are cytoplasmic; the sequence is MEATSHPAVHPVAVPPQFQGAGPPAIQMKDFPGSPGTAGGLALRFTQFGFSLIS. Helical transmembrane passes span 55 to 75 and 76 to 96; these read LCIM…FLVA and TMVF…YALL. Residues 97–114 lie on the Cytoplasmic side of the membrane; it reads TQRSFRNPLIVSLFVVGD. The helical transmembrane segment at 115 to 135 threads the bilayer; the sequence is WVTSTMTFAGACAAAGITVLI. The Extracellular segment spans residues 136–154; that stretch reads DNDLEQCGPNHCGRFEAAA. A helical transmembrane segment spans residues 155–175; it reads AMAFMSWTATTLSFCLSFWLL. Residues 176–179 lie on the Cytoplasmic side of the membrane; the sequence is ASCR.

This sequence belongs to the Casparian strip membrane proteins (CASP) family. As to quaternary structure, homodimer and heterodimers.

It is found in the cell membrane. The protein is CASP-like protein 5A2 of Physcomitrium patens (Spreading-leaved earth moss).